The primary structure comprises 123 residues: Chaperone protein SycN (123 aa).

As to quaternary structure, interacts with YscB to form a complex which specifically binds to YopN.

The protein localises to the cytoplasm. It localises to the cell inner membrane. Functionally, functions as a specific chaperone for YopN. It could facilitate the secretion and the subsequent translocation of YopN. This is Chaperone protein SycN (sycN) from Yersinia enterocolitica.